The sequence spans 88 residues: Co-chaperonin GroES (88 aa).

The protein belongs to the GroES chaperonin family. Heptamer of 7 subunits arranged in a ring. Interacts with the chaperonin GroEL.

The protein resides in the cytoplasm. Functionally, together with the chaperonin GroEL, plays an essential role in assisting protein folding. The GroEL-GroES system forms a nano-cage that allows encapsulation of the non-native substrate proteins and provides a physical environment optimized to promote and accelerate protein folding. GroES binds to the apical surface of the GroEL ring, thereby capping the opening of the GroEL channel. The chain is Co-chaperonin GroES from Rubrobacter xylanophilus (strain DSM 9941 / JCM 11954 / NBRC 16129 / PRD-1).